The primary structure comprises 1020 residues: MSTIVFGSFTCHLDAAIHQDNADRLAKAWTRPENRQVSNAHLLCRRAAESLINTYESATASAWKGLEEKLQPMFAKREFSKTVTKRKGLRCFKESSEKFIEKKLRKQYQEERERLQFLNGPDAIVNQISVDKCEASVRVPSPHIIEKPSFVTPSMKKKVVFKKVRMSEASLQLFMRRVAANAKANGQKVEIIGRKRVVGNYTTKSRLTYFRTHVRHLDGSKPRYDLVLDEATKKILQLFANTSGFHHVHKKGEVTPGMSGFVVNPMNLSDPMQVYDTDLFIVRGKHNSILVDSRCKVSKKQSNEIIHYSDPGKQFSDGFTNSFMQCKLRETDHQCTSDLDVKECGYVAALVCQAIIPCGKITCLQCAQKYSYMSQQEIRDRFSTVIEQHEKTVMDNYPQFSHVLAFLKRYRELMRVENQNYEAFKDITHMIGERKEAPFSHLNKINELIIKGGMMSAQDYIEASDHLRELARYQKNRTENIRSGSIKAFRNKISSKAHVNMQLMCDNQLDTNGNFVWGQREYHAKRFFRNYFDVIDVSEGYRRHIVRENPRGIRKLAIGNLVMSTNLAALRKQLLGEECIHFEVSKECTSKRGENFVYQCCCVTHEDGTPLESEIISPTKNHLVVGNSGDSKYVDLPTAKGGAMFIAKAGYCYINIFLAMLININEDEAKSFTKTVRDTLVPKLGTWPSMMDLATACHFLAVLYPETRNAELPRILVDHEAKIFHVVDSFGSLSTGMHVLKANTINQLISFASDTLDSNMKTYLVGGLEVDKCDEFKNVKLLIRSIYKPQIMEQVLKEEPYLLLMSVLSPGVLMALFNSGSLEKATQYWITRSHSLAAITSMLSALAAKVSLASTLNAQMSVIDEHAAVLYDSVFVGTQPYASYMMAVKTLERMKARTESDHTLNDLGFSVLRQATPHLVEKKLSPGIGASLERVKLVGKILCNLGIAAMAKTYTKTFHPKRRRRFRRQVRHLRSVITWQPVQTPERRSPMEKRRCGLLYIPVDGEAILQSHRNLTKFSS.

A Peptidase S30 domain is found at 165–308; that stretch reads RMSEASLQLF…KKQSNEIIHY (144 aa). Active-site for P1 proteinase activity residues include His-216, Asp-225, and Ser-259. An Involved in interaction with stylet and aphid transmission motif is present at residues 360-363; sequence KITC. The Involved in virions binding and aphid transmission motif lies at 618–620; sequence PTK. In terms of domain architecture, Peptidase C6 spans 644-766; it reads MFIAKAGYCY…DSNMKTYLVG (123 aa). Active-site for helper component proteinase activity residues include Cys-652 and His-725.

This sequence belongs to the potyviridae P3N-PIPO polyprotein family. In terms of assembly, interacts (via PIPO domain) with host PCaP1 protein; this interaction may help to anchor the movement complex to the plasma membrane from which the complex could move to the plasmodesmata. Post-translationally, potyviral RNA is expressed as two polyproteins which undergo post-translational proteolytic processing. Genome polyprotein is processed by NIa-pro, P1 and HC-pro proteinases resulting in the production of at least ten individual proteins. P3N-PIPO is cleaved by P1 and HC-pro proteinases resulting in the production of three individual proteins. The P1 proteinase and the HC-pro cleave only their respective C-termini autocatalytically.

It localises to the host cell junction. The protein localises to the host plasmodesma. The enzyme catalyses Hydrolyzes a Gly-|-Gly bond at its own C-terminus, commonly in the sequence -Tyr-Xaa-Val-Gly-|-Gly, in the processing of the potyviral polyprotein.. In terms of biological role, required for aphid transmission and also has proteolytic activity. Only cleaves a Gly-Gly dipeptide at its own C-terminus. Interacts with virions and aphid stylets. Acts as a suppressor of RNA-mediated gene silencing, also known as post-transcriptional gene silencing (PTGS), a mechanism of plant viral defense that limits the accumulation of viral RNAs. May have RNA-binding activity. Functionally, allows efficient cell to cell propagation, by bypassing the host cell wall barrier. Transports viral genome to neighboring plant cells directly through plasmosdesmata, without any budding. This Plum pox potyvirus (isolate NAT) (PPV) protein is P3N-PIPO polyprotein.